Reading from the N-terminus, the 243-residue chain is Probable phosphatase CLI_3563 (243 aa).

Residues His8, His10, His16, His41, Glu74, His102, His132, Asp192, and His194 each contribute to the Zn(2+) site.

Belongs to the PHP family. Zn(2+) is required as a cofactor.

This chain is Probable phosphatase CLI_3563, found in Clostridium botulinum (strain Langeland / NCTC 10281 / Type F).